Here is a 169-residue protein sequence, read N- to C-terminus: Peptide deformylase (169 aa).

Fe cation-binding residues include Cys-91 and His-133. The active site involves Glu-134. Residue His-137 coordinates Fe cation.

Belongs to the polypeptide deformylase family. Fe(2+) serves as cofactor.

It catalyses the reaction N-terminal N-formyl-L-methionyl-[peptide] + H2O = N-terminal L-methionyl-[peptide] + formate. Removes the formyl group from the N-terminal Met of newly synthesized proteins. Requires at least a dipeptide for an efficient rate of reaction. N-terminal L-methionine is a prerequisite for activity but the enzyme has broad specificity at other positions. This is Peptide deformylase from Enterobacter sp. (strain 638).